A 562-amino-acid polypeptide reads, in one-letter code: NAD-dependent malic enzyme (562 aa).

Tyr101 acts as the Proton donor in catalysis. Arg154 lines the NAD(+) pocket. Residue Lys172 is the Proton acceptor of the active site. Glu243, Asp244, and Asp267 together coordinate a divalent metal cation. Residues Asp267 and Asn415 each contribute to the NAD(+) site.

This sequence belongs to the malic enzymes family. In terms of assembly, homotetramer. Requires Mg(2+) as cofactor. Mn(2+) serves as cofactor.

The enzyme catalyses (S)-malate + NAD(+) = pyruvate + CO2 + NADH. It carries out the reaction oxaloacetate + H(+) = pyruvate + CO2. This chain is NAD-dependent malic enzyme, found in Shewanella baltica (strain OS155 / ATCC BAA-1091).